The sequence spans 64 residues: Large ribosomal subunit protein bL35 (64 aa).

The protein belongs to the bacterial ribosomal protein bL35 family.

The chain is Large ribosomal subunit protein bL35 from Vibrio metschnikovii.